Here is a 683-residue protein sequence, read N- to C-terminus: Cysteine-rich receptor-like protein kinase 28 (683 aa).

A signal peptide spans 1–24; sequence MEHVRVIFFFFACVLKIVPFICLA. Over 25–288 the chain is Extracellular; sequence QKDKYEFPPG…RTGKGKGGSK (264 aa). Gnk2-homologous domains follow at residues 32-136 and 142-251; these read PPGF…NMII and TTPT…TWRF. N-linked (GlcNAc...) asparagine glycosylation is found at asparagine 43, asparagine 47, asparagine 73, and asparagine 153. The disordered stretch occupies residues 263-283; sequence PAIQPADSPTSAARTERTGKG. The helical transmembrane segment at 289 to 309 threads the bilayer; it reads VIVAIVIPIVFVALFAICLCL. Over 310 to 683 the chain is Cytoplasmic; that stretch reads LLKWKKNKSV…DVTVSELSPR (374 aa). The region spanning 361 to 641 is the Protein kinase domain; sequence FSPENELGRG…ALMLNSYSYT (281 aa). Residues 367-375 and lysine 389 contribute to the ATP site; that span reads LGRGGFGSV. At tyrosine 434 the chain carries Phosphotyrosine. Catalysis depends on aspartate 486, which acts as the Proton acceptor. Serine 490 bears the Phosphoserine mark. A Phosphothreonine modification is found at threonine 528. Position 536 is a phosphotyrosine (tyrosine 536).

It belongs to the protein kinase superfamily. Ser/Thr protein kinase family. CRK subfamily.

The protein localises to the membrane. It catalyses the reaction L-seryl-[protein] + ATP = O-phospho-L-seryl-[protein] + ADP + H(+). It carries out the reaction L-threonyl-[protein] + ATP = O-phospho-L-threonyl-[protein] + ADP + H(+). This chain is Cysteine-rich receptor-like protein kinase 28 (CRK28), found in Arabidopsis thaliana (Mouse-ear cress).